A 1120-amino-acid chain; its full sequence is Cluster 41 polyketide synthase (1120 aa).

Residues P7–K430 enclose the Ketosynthase family 3 (KS3) domain. Catalysis depends on for beta-ketoacyl synthase activity residues C178, H313, and H353. The interval V539–D796 is malonyl-CoA:ACP transacylase (MAT) domain. S625 serves as the catalytic For acyl/malonyl transferase activity. Residues I804–E943 are ketoreductase (KR) domain. A Carrier domain is found at D1042 to T1116. Residue S1076 is modified to O-(pantetheine 4'-phosphoryl)serine.

Polyketide synthase; part of the gene cluster 41 that mediates the biosynthesis of an extracellular and diffusible metabolite that is able to stimulate colony sclerotial production. This chain is Cluster 41 polyketide synthase, found in Aspergillus flavus (strain ATCC 200026 / FGSC A1120 / IAM 13836 / NRRL 3357 / JCM 12722 / SRRC 167).